Here is a 683-residue protein sequence, read N- to C-terminus: Protein hook (683 aa).

A Calponin-homology (CH) domain is found at 5–123 (NGMYYSLLEW…RLLQLVLGCA (119 aa)). Coiled coils occupy residues 135–440 (EIMC…LKCG) and 484–594 (QTAL…AKEV).

This sequence belongs to the hook family. As to quaternary structure, homodimer. Interacts with microtubules via its N-terminus.

The protein localises to the cytoplasm. Its subcellular location is the cytoskeleton. It localises to the endosome. The protein resides in the synapse. In terms of biological role, involved in endocytic trafficking by stabilizing organelles of the endocytic pathway. Probably acts as a cytoskeletal linker protein required to tether endosome vesicles to the cytoskeleton. Involved in modulation of endocytosis at stages required for down-regulation of membrane proteins that control synapse size. Not involved in synaptic vesicle recycling. Required in R7 cells for boss endocytosis into multivesicular bodies (MVBs). Has a role in regulating adult longevity. The polypeptide is Protein hook (Drosophila grimshawi (Hawaiian fruit fly)).